The primary structure comprises 155 residues: Type 1 phosphatases regulator YPI1 (155 aa).

A compositionally biased stretch (polar residues) spans 1 to 21 (MSGNQMAMGSEQQQTVGSRTV). 2 disordered regions span residues 1 to 56 (MSGN…WEEN) and 79 to 155 (EDEE…EKKD). The residue at position 2 (serine 2) is an N-acetylserine. Phosphoserine is present on serine 22. The GLC7-binding motif lies at 51–53 (VRW). A compositionally biased stretch (low complexity) spans 93 to 102 (SSSSGSSSSE). A compositionally biased stretch (basic and acidic residues) spans 104–114 (ENEKDLDFNER). Over residues 115–128 (RQRRLERRHRKLEK) the composition is skewed to basic residues. At serine 133 the chain carries Phosphoserine. Residues 144 to 155 (SEYRRKQQEKKD) are compositionally biased toward basic and acidic residues.

This sequence belongs to the YPI1 family. As to quaternary structure, interacts with GLC7, PPZ1 and SDS22.

The protein resides in the nucleus. Its function is as follows. Regulator of type 1 phosphatases which maintains protein phosphatase activity under strict control. Regulates the nuclear localization of type 1 phosphatase GLC7 and SDS22, and is involved in the regulation of mRNA 3'-end processing. May also regulate the activity of type 1 phosphatase PPZ1. The polypeptide is Type 1 phosphatases regulator YPI1 (YPI1) (Saccharomyces cerevisiae (strain YJM789) (Baker's yeast)).